Here is a 386-residue protein sequence, read N- to C-terminus: Indole-3-acetate O-methyltransferase 1 (386 aa).

Y30 is an S-adenosyl-L-methionine binding site. Substrate is bound by residues Y30 and 33-37; that span reads NSQAQ. S-adenosyl-L-methionine-binding positions include G72, 72-73, N78, 108-111, D110, 152-154, and 169-171; these read GC, FSDL, SFY, and AFS. Position 170–174 (170–174) interacts with substrate; sequence FSLHW. N191, V195, R277, D278, F280, and N281 together coordinate Mg(2+). Residue S334 participates in substrate binding.

This sequence belongs to the methyltransferase superfamily. SABATH family. In terms of assembly, homodimer. It depends on Mg(2+) as a cofactor. As to expression, expressed in seedling roots and leaves. Expressed in the stigma, funiculus, and vascular bundles in sepals, petals and stamens.

The catalysed reaction is (indol-3-yl)acetate + S-adenosyl-L-methionine = methyl (indol-3-yl)acetate + S-adenosyl-L-homocysteine. Its function is as follows. Catalyzes the methylation of the free carboxyl end of the plant hormone indole-3-acetic acid (IAA). Converts IAA to IAA methyl ester (MeIAA). Regulates IAA activities by IAA methylation. Methylation of IAA plays an important role in regulating plant development and auxin homeostasis. Required for correct leaf pattern formation. MeIAA seems to be an inactive form of IAA. This is Indole-3-acetate O-methyltransferase 1 (IAMT1) from Arabidopsis thaliana (Mouse-ear cress).